The chain runs to 580 residues: Type 3 secretion system translocon protein SctE (580 aa).

2 ipgC chaperone binding domain regions span residues K15–L45 and I51–S72. The tract at residues N61–P70 is mediates interaction with human MAD2L2. Residues A104–F224 are a coiled coil. The next 2 helical transmembrane spans lie at I313–S333 and I399–V419.

This sequence belongs to the SctE/SipB/YopB family. As to quaternary structure, the core secretion machinery of the T3SS is composed of approximately 20 different proteins, including cytoplasmic components, a base, an export apparatus and a needle. This subunit is involved in the formation of a pore, called the translocon, in host membrane. Interacts with IpaC/SctB. Interacts with the needle tip protein IpaD/SctA. Interacts with the molecular chaperone IpgC, which prevents premature association with IpaC/SctB within the cytoplasm of Shigella cells and protects IpaB/SctE from proteolysis. Interacts with the host protein ICE in the cytoplasm of infected macrophages. Interacts with human MAD2L2 in the G2/M phase of the cell cycle.

The protein localises to the secreted. It localises to the host membrane. The protein resides in the host cell. It is found in the host nucleus. Interaction with the membrane is affected by the pH. IpaB/SctE is more efficient in destabilizing the membrane at pH 5.0 than at neutral pH. Component of the type III secretion system (T3SS), also called injectisome, which is used to inject bacterial effector proteins into eukaryotic host cells. IpaB/SctE and IpaC/SctB are inserted into the host membrane where they form a pore and allow the translocation of effector proteins into the cytosol of target cells. Interaction with IpaD/SctA at needle tips leads to the formation of the MxiH/SctF-IpaD/SctA-IpaB/SctE ternary complex, which is essential for host cell sensing. Interaction of IpaB/SctE with host membrane lipids promotes recruitment of IpaC/SctB at the needle tip concomitant with translocon insertion into the host membrane and type III secretion induction. Its function is as follows. Required for efficient dissemination. Necessary for lysis of the two cellular membranes that surround bacteria in protrusions during cell-to-cell spread. Is sufficient to induce macrophage apoptosis through activation of the interleukin-1 beta converting enzyme (ICE) in infected macrophages. In epithelial cells, causes cell-cycle arrest by targeting host MAD2L2, an anaphase-promoting complex/cyclosome (APC) inhibitor. The protein is Type 3 secretion system translocon protein SctE of Shigella flexneri.